A 120-amino-acid chain; its full sequence is Large ribosomal subunit protein bL19 (120 aa).

The protein belongs to the bacterial ribosomal protein bL19 family.

Functionally, this protein is located at the 30S-50S ribosomal subunit interface and may play a role in the structure and function of the aminoacyl-tRNA binding site. This is Large ribosomal subunit protein bL19 from Renibacterium salmoninarum (strain ATCC 33209 / DSM 20767 / JCM 11484 / NBRC 15589 / NCIMB 2235).